The sequence spans 490 residues: Keratin, type II cytoskeletal 8 (490 aa).

The span at 1–27 shows a compositional bias: polar residues; it reads MSIRVTQKSYKMSTSGPRAFSSRSFTS. A disordered region spans residues 1–48; it reads MSIRVTQKSYKMSTSGPRAFSSRSFTSGPGARISSSSFSRVGSSSSSF. Residues 1-96 are head; it reads MSIRVTQKSY…DPNIQAVRTQ (96 aa). S9 is modified (phosphoserine; by PKC/PRKCE). K11 is covalently cross-linked (Glycyl lysine isopeptide (Lys-Gly) (interchain with G-Cter in SUMO2)). S13, S15, S21, and S22 each carry phosphoserine. Position 23 is an omega-N-methylarginine (R23). Position 24 is a phosphoserine; by PKC/PRKCE (S24). Position 26 is a phosphothreonine (T26). The residue at position 27 (S27) is a Phosphoserine. Position 32 is an omega-N-methylarginine (R32). Phosphoserine is present on residues S34, S37, and S39. Residues 34–48 show a composition bias toward low complexity; it reads SSSSFSRVGSSSSSF. An Omega-N-methylarginine modification is found at R40. S43, S44, and S47 each carry phosphoserine. R49 is modified (asymmetric dimethylarginine; alternate). Position 49 is an omega-N-methylarginine; alternate (R49). A Phosphoserine modification is found at S51. A Phosphoserine; by MAPK modification is found at S80. The segment at 97 to 132 is coil 1A; that stretch reads EKEQIKSLNNKFASFIDKVRFLEQQNKMLETKWSLL. The IF rod domain maps to 97-408; the sequence is EKEQIKSLNN…KLLEGEESRL (312 aa). Position 107 is an N6-malonyllysine (K107). Glycyl lysine isopeptide (Lys-Gly) (interchain with G-Cter in SUMO2) cross-links involve residues K128 and K136. The tract at residues 133–149 is linker 1; sequence QQQKTSRSNMDNMFESY. A coil 1B region spans residues 150–241; sequence INNLRRQLEA…QIHEEEIREL (92 aa). K203 is covalently cross-linked (Glycyl lysine isopeptide (Lys-Gly) (interchain with G-Cter in SUMO1); alternate). K203 is covalently cross-linked (Glycyl lysine isopeptide (Lys-Gly) (interchain with G-Cter in SUMO2); alternate). An N6-acetyllysine modification is found at K213. The tract at residues 242-265 is linker 12; sequence QSQISDTSVVLSMDNSRSLDMDGI. 2 positions are modified to phosphoserine: S259 and S280. Positions 266 to 403 are coil 2; that stretch reads IAEVRAQYED…ITTYRKLLEG (138 aa). Positions 267-387 are necessary for interaction with PNN; it reads AEVRAQYEDI…REYQELMNVK (121 aa). Residue K291 forms a Glycyl lysine isopeptide (Lys-Gly) (interchain with G-Cter in SUMO2) linkage. Residue K301 forms a Glycyl lysine isopeptide (Lys-Gly) (interchain with G-Cter in SUMO2); alternate linkage. K301 carries the N6-acetyllysine; alternate modification. A Glycyl lysine isopeptide (Lys-Gly) (interchain with G-Cter in SUMO2) cross-link involves residue K310. Residue K331 forms a Glycyl lysine isopeptide (Lys-Gly) (interchain with G-Cter in SUMO2); alternate linkage. K331 carries the post-translational modification N6-acetyllysine; alternate. S336 bears the Phosphoserine mark. Residue K399 forms a Glycyl lysine isopeptide (Lys-Gly) (interchain with G-Cter in SUMO2) linkage. The interval 404–490 is tail; the sequence is EESRLESGMQ…VSESSDVVSK (87 aa). Phosphoserine is present on residues S406, S410, S416, S423, S430, S432, and S438. K479 participates in a covalent cross-link: Glycyl lysine isopeptide (Lys-Gly) (interchain with G-Cter in SUMO1); alternate. K479 participates in a covalent cross-link: Glycyl lysine isopeptide (Lys-Gly) (interchain with G-Cter in SUMO2); alternate. A phosphoserine mark is found at S482, S484, S485, and S489.

It belongs to the intermediate filament family. In terms of assembly, heterotetramer of two type I and two type II keratins. Forms a heterodimer with KRT18. Associates with KRT20. Interacts with PLEC isoform 1C, when in a heterodimer with KRT18. Interacts with PNN. When associated with KRT19, interacts with DMD. Interacts with TCHP. Interacts with APEX1. Interacts with GPER1. Interacts with EPPK1. Interacts with PKP1 and PKP2. Phosphorylation on serine residues is enhanced during EGF stimulation and mitosis. Ser-80 phosphorylation plays an important role in keratin filament reorganization. Post-translationally, O-glycosylated. O-GlcNAcylation at multiple sites increases solubility, and decreases stability by inducing proteasomal degradation. In terms of processing, O-glycosylated (O-GlcNAcylated), in a cell cycle-dependent manner. Expressed in abundance in the epithelia of colon, bladder, ileum, and stomach, with lower expression observed in earskin (at protein level). Also expressed in pancreas, liver, dudenum and jejunum.

The protein resides in the cytoplasm. Its subcellular location is the nucleus. The protein localises to the nucleoplasm. It localises to the nucleus matrix. Together with KRT19, helps to link the contractile apparatus to dystrophin at the costameres of striated muscle. The sequence is that of Keratin, type II cytoskeletal 8 (Krt8) from Mus musculus (Mouse).